The following is a 292-amino-acid chain: Protease HtpX (292 aa).

The next 2 membrane-spanning stretches (helical) occupy residues 4–24 (IVLF…ILFL) and 32–52 (IYGL…LSLI). Residue H139 participates in Zn(2+) binding. The active site involves E140. H143 contributes to the Zn(2+) binding site. Transmembrane regions (helical) follow at residues 147-167 (GDMI…IFIS) and 193-213 (FVYF…ASII). E222 serves as a coordination point for Zn(2+).

The protein belongs to the peptidase M48B family. Requires Zn(2+) as cofactor.

Its subcellular location is the cell membrane. The chain is Protease HtpX from Buchnera aphidicola subsp. Acyrthosiphon pisum (strain 5A).